We begin with the raw amino-acid sequence, 158 residues long: NAD(P)H-quinone oxidoreductase subunit J, chloroplastic (158 aa).

This sequence belongs to the complex I 30 kDa subunit family. NDH is composed of at least 16 different subunits, 5 of which are encoded in the nucleus.

Its subcellular location is the plastid. The protein resides in the chloroplast thylakoid membrane. The catalysed reaction is a plastoquinone + NADH + (n+1) H(+)(in) = a plastoquinol + NAD(+) + n H(+)(out). The enzyme catalyses a plastoquinone + NADPH + (n+1) H(+)(in) = a plastoquinol + NADP(+) + n H(+)(out). Its function is as follows. NDH shuttles electrons from NAD(P)H:plastoquinone, via FMN and iron-sulfur (Fe-S) centers, to quinones in the photosynthetic chain and possibly in a chloroplast respiratory chain. The immediate electron acceptor for the enzyme in this species is believed to be plastoquinone. Couples the redox reaction to proton translocation, and thus conserves the redox energy in a proton gradient. The polypeptide is NAD(P)H-quinone oxidoreductase subunit J, chloroplastic (Psilotum nudum (Whisk fern)).